The chain runs to 250 residues: DNA polymerase sliding clamp (250 aa).

It belongs to the PCNA family. As to quaternary structure, homotrimer. The subunits circularize to form a toroid; DNA passes through its center. Replication factor C (RFC) is required to load the toroid on the DNA.

In terms of biological role, sliding clamp subunit that acts as a moving platform for DNA processing. Responsible for tethering the catalytic subunit of DNA polymerase and other proteins to DNA during high-speed replication. The sequence is that of DNA polymerase sliding clamp from Methanococcus maripaludis (strain C6 / ATCC BAA-1332).